Consider the following 421-residue polypeptide: Subtilisin-like protease 2 (421 aa).

The first 16 residues, 1-16 (MQLLNFGLLLLPFVAG), serve as a signal peptide directing secretion. Residues 17-122 (DLAPQPEPLL…VHPDQHVYLA (106 aa)) constitute a propeptide that is removed on maturation. Residues 36 to 122 (QYIVTLKEGL…VHPDQHVYLA (87 aa)) form the Inhibitor I9 domain. The Peptidase S8 domain occupies 131 to 421 (RWGLGYMSSK…ERKFTLPKYY (291 aa)). Catalysis depends on charge relay system residues D169 and H201. 3 N-linked (GlcNAc...) asparagine glycosylation sites follow: N248, N261, and N348. The Charge relay system role is filled by S357. An N-linked (GlcNAc...) asparagine glycan is attached at N388.

The protein belongs to the peptidase S8 family.

It is found in the secreted. In terms of biological role, secreted subtilisin-like serine protease with keratinolytic activity that contributes to pathogenicity. The chain is Subtilisin-like protease 2 (SUB2) from Trichophyton verrucosum (strain HKI 0517).